The following is a 352-amino-acid chain: tRNA N6-adenosine threonylcarbamoyltransferase (352 aa).

Fe cation contacts are provided by His117 and His121. Substrate contacts are provided by residues 140–144 (LVSGG), Asp173, Gly186, and Asn287. Residue Asp315 participates in Fe cation binding.

Belongs to the KAE1 / TsaD family. Fe(2+) is required as a cofactor.

It localises to the cytoplasm. The enzyme catalyses L-threonylcarbamoyladenylate + adenosine(37) in tRNA = N(6)-L-threonylcarbamoyladenosine(37) in tRNA + AMP + H(+). Its function is as follows. Required for the formation of a threonylcarbamoyl group on adenosine at position 37 (t(6)A37) in tRNAs that read codons beginning with adenine. Is involved in the transfer of the threonylcarbamoyl moiety of threonylcarbamoyl-AMP (TC-AMP) to the N6 group of A37, together with TsaE and TsaB. TsaD likely plays a direct catalytic role in this reaction. This is tRNA N6-adenosine threonylcarbamoyltransferase from Psychrobacter cryohalolentis (strain ATCC BAA-1226 / DSM 17306 / VKM B-2378 / K5).